The following is a 465-amino-acid chain: Cysteine--tRNA ligase 2 (465 aa).

Cys30 lines the Zn(2+) pocket. A 'HIGH' region motif is present at residues 32–42; the sequence is ITVYDYCHVGH. Zn(2+) contacts are provided by Cys214, His239, and Glu243. The 'KMSKS' region signature appears at 271–275; that stretch reads KMSKS. An ATP-binding site is contributed by Lys274.

Belongs to the class-I aminoacyl-tRNA synthetase family. In terms of assembly, monomer. Zn(2+) is required as a cofactor.

Its subcellular location is the cytoplasm. It carries out the reaction tRNA(Cys) + L-cysteine + ATP = L-cysteinyl-tRNA(Cys) + AMP + diphosphate. In Burkholderia lata (strain ATCC 17760 / DSM 23089 / LMG 22485 / NCIMB 9086 / R18194 / 383), this protein is Cysteine--tRNA ligase 2.